Reading from the N-terminus, the 523-residue chain is Light-independent protochlorophyllide reductase subunit B (523 aa).

D36 is a [4Fe-4S] cluster binding site. The active-site Proton donor is the D290. Residue 425 to 426 (GL) coordinates substrate.

Belongs to the ChlB/BchB/BchZ family. Protochlorophyllide reductase is composed of three subunits; ChlL, ChlN and ChlB. Forms a heterotetramer of two ChlB and two ChlN subunits. The cofactor is [4Fe-4S] cluster.

It carries out the reaction chlorophyllide a + oxidized 2[4Fe-4S]-[ferredoxin] + 2 ADP + 2 phosphate = protochlorophyllide a + reduced 2[4Fe-4S]-[ferredoxin] + 2 ATP + 2 H2O. It functions in the pathway porphyrin-containing compound metabolism; chlorophyll biosynthesis (light-independent). Its function is as follows. Component of the dark-operative protochlorophyllide reductase (DPOR) that uses Mg-ATP and reduced ferredoxin to reduce ring D of protochlorophyllide (Pchlide) to form chlorophyllide a (Chlide). This reaction is light-independent. The NB-protein (ChlN-ChlB) is the catalytic component of the complex. This is Light-independent protochlorophyllide reductase subunit B from Prochlorococcus marinus (strain MIT 9301).